A 255-amino-acid chain; its full sequence is 3-dehydroquinate dehydratase (255 aa).

3-dehydroquinate is bound by residues 47 to 49 (EWR) and arginine 83. Residue histidine 144 is the Proton donor/acceptor of the active site. The active-site Schiff-base intermediate with substrate is lysine 171. Arginine 214, serine 233, and glutamine 237 together coordinate 3-dehydroquinate.

This sequence belongs to the type-I 3-dehydroquinase family. As to quaternary structure, homodimer.

The enzyme catalyses 3-dehydroquinate = 3-dehydroshikimate + H2O. It participates in metabolic intermediate biosynthesis; chorismate biosynthesis; chorismate from D-erythrose 4-phosphate and phosphoenolpyruvate: step 3/7. Involved in the third step of the chorismate pathway, which leads to the biosynthesis of aromatic amino acids. Catalyzes the cis-dehydration of 3-dehydroquinate (DHQ) and introduces the first double bond of the aromatic ring to yield 3-dehydroshikimate. This is 3-dehydroquinate dehydratase from Alkaliphilus oremlandii (strain OhILAs) (Clostridium oremlandii (strain OhILAs)).